The chain runs to 1379 residues: MAQTLSFNGRRRVRKFFGKIPEVAEMPNLIEVQKASYDQFLMVEEPKGGRPDEGLQAVFKSVFPITDFSGASMLEFVSYEFEPPKFDVDECRQRDLTYAAPLKVTLRLIVFDIDEDTGAKSIKDIKEQSVYMGDMPLMTNNGTFIVNGTERVIVSQMHRSPGVFFDHDKGKSHSSGKLLFAARVIPYRGSWLDIEFDAKDIVYARIDRRRKIPVTSLLMALGMDGEEILDTFYTKSLYKRDGEGWRIPFKPETLKGAKAITEMVDADTGEVVVEAGKKLTPRLLRQLSDKGLKALKAADDDLYGNYLAGDIVNYSTGEIYLEAGDEIDEKTLGIILANGFDEIPVLGIDHINVGAYIRNTLSADKNENRQDALFDIYRVMRPGEPPTMESAEAMFNSLFFDAERYDLSAVGRVKMNMRLDLTVEDTVRILRKDDILAVVRMLVELRDGKGEIDDIDNLGNRRVRSVGELMENQYRLGLLRMERAIKERMSSIEIDTVMPQDLINAKPAAAAVREFFGSSQLSQFMDQVNPLSEITHKRRLSALGPGGLTRERAGFEVRDVHPTHYGRICPIETPEGPNIGLINSLATFARVNKYGFIESPYRRIVDGRVTSDVLYLSAMEEAKYYVAQANAEMNADGSFVDEFVVCRHAGEVMLAPRDSMNLMDVSPKQVVSVAAALIPFLENDDANRALMGSNMQRQAVPLLRAEAPFVGTGMEPVVARDSGAAIGARRGGVVDQVDATRIVIRATEDLEAGKSGVDIYRLQKFQRSNQNTCVNQRPLVTVGDEVNRGDILADGPSTDLGDLALGRNALVAFMPWNGYNYEDSILLSERIVADDVFTSIHIEEFEVMARDTKLGPEEITRDIPNVSEEALKNLDEAGIVYIGAEVQPGDILVGKITPKGESPMTPEEKLLRAIFGEKASDVRDTSMRMPPGTYGTIVEVRVFNRHGVEKDERAMAIEREEIERLAKDRDDEQAILDRNVYGRLIEMLRGQASIAGPKGFKKGTELSNAVVSEYPRSQWWMFAVEDEKVQSELEALRGQYDESKSRLEQRFMDKVEKVQRGDEMPPGVMKMVKVFVAVKRKIQPGDKMAGRHGNKGVVSRIVPVEDMPFLEDGTHVDVVLNPLGVPSRMNVGQILETHLGWACAGMGRQIGELIDAYKANGNIEPLRKTIGDVVGDGPKAEQVQDFDDDSVLRLADQWKRGVSIATPVFDGANEADVNDMLRLAGLKDTGQSTLYDGRTGEQFDRQVTVGYIYMLKLNHLVDDKIHARSIGPYSLVTQQPLGGKAQFGGQRFGEMEVWALEAYGAAYTLQEMLTVKSDDVAGRTKVYEAIVRGDDTFEAGIPESFNVLVKEMRSLGLSVELENTKLDEAQAAQLPDAAE.

This sequence belongs to the RNA polymerase beta chain family. The RNAP catalytic core consists of 2 alpha, 1 beta, 1 beta' and 1 omega subunit. When a sigma factor is associated with the core the holoenzyme is formed, which can initiate transcription.

The enzyme catalyses RNA(n) + a ribonucleoside 5'-triphosphate = RNA(n+1) + diphosphate. Its function is as follows. DNA-dependent RNA polymerase catalyzes the transcription of DNA into RNA using the four ribonucleoside triphosphates as substrates. This Rhizobium leguminosarum bv. trifolii (strain WSM2304) protein is DNA-directed RNA polymerase subunit beta.